Consider the following 267-residue polypeptide: Hydroxynaphthalene reductase-like protein Arp2 (267 aa).

NADP(+)-binding residues include I25, N45, D71, and N98. Active-site proton donor residues include S147 and S148. NADP(+) contacts are provided by Y162, K166, V195, and T197. Y162 acts as the Proton acceptor in catalysis. Catalysis depends on K166, which acts as the Lowers pKa of active site Tyr.

This sequence belongs to the short-chain dehydrogenases/reductases (SDR) family.

Functionally, hydroxynaphthalene reductase-like protein; part of the Pks2 gene cluster that mediates the formation of infectious structures (appressoria), enabling these fungi to kill insects faster. The product of the Pks2 gene cluster is different from the one of Pks1 and has still not been identified. In Metarhizium guizhouense (strain ARSEF 977), this protein is Hydroxynaphthalene reductase-like protein Arp2.